Consider the following 452-residue polypeptide: Imaginal disk growth factor 6 (452 aa).

Positions 1 to 18 (MIIKALAIVSLCLASIQA) are cleaved as a signal peptide. Positions 29–452 (KHLVCYYDSA…LRAIKYRLTN (424 aa)) constitute a GH18 domain. A disulfide bond links Cys-33 and Cys-60. Residue Asn-233 is glycosylated (N-linked (GlcNAc...) asparagine). The cysteines at positions 352 and 435 are disulfide-linked.

It belongs to the glycosyl hydrolase 18 family. IDGF subfamily. Glycosylated. As to expression, in larvae, it is expressed in the fat body and by hemocytes.

Its subcellular location is the secreted. Functionally, probably required to stimulate the proliferation, polarization and motility of imaginal disk cells. May act by stabilizing the binding of insulin-like peptides to its receptor through a simultaneous interaction with both molecules to form a multiprotein signaling complex. The protein is Imaginal disk growth factor 6 of Drosophila melanogaster (Fruit fly).